The sequence spans 306 residues: UDP-N-acetylenolpyruvoylglucosamine reductase (306 aa).

One can recognise an FAD-binding PCMH-type domain in the interval 28 to 194 (KIGNISKLFL…LKTELNLKKE (167 aa)). The active-site Proton donor is the serine 223. Glutamate 295 is a catalytic residue.

It belongs to the MurB family. Requires FAD as cofactor.

It localises to the cytoplasm. The catalysed reaction is UDP-N-acetyl-alpha-D-muramate + NADP(+) = UDP-N-acetyl-3-O-(1-carboxyvinyl)-alpha-D-glucosamine + NADPH + H(+). The protein operates within cell wall biogenesis; peptidoglycan biosynthesis. Its function is as follows. Cell wall formation. This chain is UDP-N-acetylenolpyruvoylglucosamine reductase, found in Borrelia garinii subsp. bavariensis (strain ATCC BAA-2496 / DSM 23469 / PBi) (Borreliella bavariensis).